We begin with the raw amino-acid sequence, 171 residues long: uncharacterized protein (171 aa).

Disordered stretches follow at residues 1–41 (MDAV…SKPK) and 114–147 (DSLG…RPKR). Residues 27 to 38 (AQQQQGPSAQGS) are compositionally biased toward low complexity. A compositionally biased stretch (polar residues) spans 116–125 (LGNTASSSSM).

This is an uncharacterized protein from Mus musculus (Mouse).